Consider the following 489-residue polypeptide: Acetylcholine receptor subunit beta (489 aa).

Positions 1–20 (NSGALLWPLIWGLLLIGTQA) are cleaved as a signal peptide. The Extracellular segment spans residues 21 to 235 (LDKEAQLRDK…ITFYLVIQRK (215 aa)). N-linked (GlcNAc...) asparagine glycans are attached at residues Asn-135 and Asn-161. A disulfide bridge connects residues Cys-148 and Cys-162. The next 3 helical transmembrane spans lie at 236–260 (PLFYIVNVIVPCILITILAIFVFYL), 268–286 (MTLSIFALLTLTVFLLLLA), and 302–323 (YLIFTMTLVTFSVIFSVVVLNL). Residues 324–457 (HHRSPNTHHM…WQYVAMVVDR (134 aa)) are Cytoplasmic-facing. A helical transmembrane segment spans residues 458 to 476 (LFLWTFIAFTSLGTLSIFL).

Belongs to the ligand-gated ion channel (TC 1.A.9) family. Acetylcholine receptor (TC 1.A.9.1) subfamily. Beta-1/CHRNB1 sub-subfamily. In terms of assembly, pentamer of two alpha chains, and one each of the beta, delta, and gamma (in immature muscle) or epsilon (in mature muscle) chains.

The protein localises to the postsynaptic cell membrane. Its subcellular location is the cell membrane. It catalyses the reaction K(+)(in) = K(+)(out). The catalysed reaction is Na(+)(in) = Na(+)(out). In terms of biological role, after binding acetylcholine, the AChR responds by an extensive change in conformation that affects all subunits and leads to opening of an ion-conducting channel across the plasma membrane. The chain is Acetylcholine receptor subunit beta (chrnb1) from Xenopus laevis (African clawed frog).